Here is a 125-residue protein sequence, read N- to C-terminus: MPHSSDSSDSSFSRSPPPGKQDSSDDVRRVQRREKNRIAAQKSRQRQTQKADTLHLESEDLEKQNAALRKEIKQLTEELKYFTSVLNSHEPLCSVLAASTPSPPEVVYSAHAFHQPHVSSPRFQP.

Residues 1 to 14 are compositionally biased toward low complexity; the sequence is MPHSSDSSDSSFSR. A disordered region spans residues 1–58; that stretch reads MPHSSDSSDSSFSRSPPPGKQDSSDDVRRVQRREKNRIAAQKSRQRQTQKADTLHLES. Positions 26 to 89 constitute a bZIP domain; that stretch reads DVRRVQRREK…KYFTSVLNSH (64 aa). Residues 28-50 form a basic motif region; it reads RRVQRREKNRIAAQKSRQRQTQK. Residue serine 43 is modified to Phosphoserine. The residue at position 48 (threonine 48) is a Phosphothreonine. Positions 54–75 are leucine-zipper; that stretch reads LHLESEDLEKQNAALRKEIKQL.

It belongs to the bZIP family. Heterodimer; mainly heterodimerizes with JUNB. The BATF-JUNB heterodimer interacts with IRF4 and IRF8. Interacts (via bZIP domain) with IRF4 and IRF8; the interaction is direct. Also forms heterodimers with JUN and JUND. Also interacts with IFI35. Post-translationally, phosphorylated on serine and threonine residues and at least one tyrosine residue. Phosphorylation at Ser-43 inhibit DNA binding activity and transforms it as a negative regulator of AP-1 mediated transcription. In terms of processing, phosphorylated. Expressed at highest levels in lung, and at lower levels in placenta, liver, kidney, spleen, and peripheral blood. Detected in SW480 colorectal cancer cell line and several hematopoietic tumor cell lines, including Raji Burkitt's lymphoma. Strongly expressed in mature B- and T-lymphocytes. Also expressed in moderate levels in lymph node and appendix and at low levels in thymus and bone marrow.

The protein resides in the nucleus. It localises to the cytoplasm. AP-1 family transcription factor that controls the differentiation of lineage-specific cells in the immune system: specifically mediates the differentiation of T-helper 17 cells (Th17), follicular T-helper cells (TfH), CD8(+) dendritic cells and class-switch recombination (CSR) in B-cells. Acts via the formation of a heterodimer with JUNB that recognizes and binds DNA sequence 5'-TGA[CG]TCA-3'. The BATF-JUNB heterodimer also forms a complex with IRF4 (or IRF8) in immune cells, leading to recognition of AICE sequence (5'-TGAnTCA/GAAA-3'), an immune-specific regulatory element, followed by cooperative binding of BATF and IRF4 (or IRF8) and activation of genes. Controls differentiation of T-helper cells producing interleukin-17 (Th17 cells) by binding to Th17-associated gene promoters: regulates expression of the transcription factor RORC itself and RORC target genes such as IL17 (IL17A or IL17B). Also involved in differentiation of follicular T-helper cells (TfH) by directing expression of BCL6 and MAF. In B-cells, involved in class-switch recombination (CSR) by controlling the expression of both AICDA and of germline transcripts of the intervening heavy-chain region and constant heavy-chain region (I(H)-C(H)). Following infection, can participate in CD8(+) dendritic cell differentiation via interaction with IRF4 and IRF8 to mediate cooperative gene activation. Regulates effector CD8(+) T-cell differentiation by regulating expression of SIRT1. Following DNA damage, part of a differentiation checkpoint that limits self-renewal of hematopoietic stem cells (HSCs): up-regulated by STAT3, leading to differentiation of HSCs, thereby restricting self-renewal of HSCs. In Homo sapiens (Human), this protein is Basic leucine zipper transcriptional factor ATF-like (BATF).